The primary structure comprises 175 residues: Thermoresistant gluconokinase (175 aa).

15–22 contacts ATP; it reads GVSGSGKS.

The protein belongs to the gluconokinase GntK/GntV family.

It catalyses the reaction D-gluconate + ATP = 6-phospho-D-gluconate + ADP + H(+). Its pathway is carbohydrate acid metabolism; D-gluconate degradation. The protein is Thermoresistant gluconokinase (gntK) of Escherichia coli (strain K12).